The following is a 454-amino-acid chain: uncharacterized protein (454 aa).

Residue 125-132 (GDVGCGKT) participates in ATP binding.

Belongs to the AFG1 ATPase family.

This is an uncharacterized protein from Schizosaccharomyces pombe (strain 972 / ATCC 24843) (Fission yeast).